The sequence spans 283 residues: uncharacterized protein (283 aa).

Residue tyrosine 55 is the Proton donor of the active site.

The protein belongs to the aldo/keto reductase family.

It is found in the cytoplasm. The protein resides in the nucleus. This is an uncharacterized protein from Schizosaccharomyces pombe (strain 972 / ATCC 24843) (Fission yeast).